The sequence spans 245 residues: Large ribosomal subunit protein eL29 (245 aa).

The span at 1 to 26 shows a compositional bias: basic residues; that stretch reads MAKSKNHTTHNQSRKWHRNGIKKPRS. 2 disordered regions span residues 1–33 and 114–245; these read MAKS…ESLK and RGLR…AKAP. Lysine 5 is modified (N6-methyllysine). Serine 31 carries the phosphoserine modification. An N6-acetyllysine modification is found at lysine 33. Residues 134-150 are compositionally biased toward low complexity; the sequence is KGKVKAQIKAQAQAQIK. The span at 157–171 shows a compositional bias: basic and acidic residues; that stretch reads AQAETKPKAQAETKP. Low complexity-rich tracts occupy residues 172-226 and 234-245; these read KAQA…ATPA and PPKGAQPPAKAP.

The protein belongs to the eukaryotic ribosomal protein eL29 family. As to quaternary structure, component of the large ribosomal subunit.

The protein localises to the cytoplasm. Component of the large ribosomal subunit. The ribosome is a large ribonucleoprotein complex responsible for the synthesis of proteins in the cell. This Oryctolagus cuniculus (Rabbit) protein is Large ribosomal subunit protein eL29 (RPL29).